Here is a 269-residue protein sequence, read N- to C-terminus: Energy-coupling factor transporter ATP-binding protein EcfA1 (269 aa).

Residues 8-242 (IVFKNVSFQY…AEGLTTIGLD (235 aa)) form the ABC transporter domain. 42 to 49 (GHNGSGKS) provides a ligand contact to ATP.

This sequence belongs to the ABC transporter superfamily. Energy-coupling factor EcfA family. In terms of assembly, forms a stable energy-coupling factor (ECF) transporter complex composed of 2 membrane-embedded substrate-binding proteins (S component), 2 ATP-binding proteins (A component) and 2 transmembrane proteins (T component).

The protein resides in the cell membrane. ATP-binding (A) component of a common energy-coupling factor (ECF) ABC-transporter complex. Unlike classic ABC transporters this ECF transporter provides the energy necessary to transport a number of different substrates. In Staphylococcus aureus (strain bovine RF122 / ET3-1), this protein is Energy-coupling factor transporter ATP-binding protein EcfA1.